Reading from the N-terminus, the 495-residue chain is UDP-glycosyltransferase 73C12 (495 aa).

His24 acts as the Proton acceptor in catalysis. His24 contributes to the an anthocyanidin binding site. Catalysis depends on Asp129, which acts as the Charge relay. UDP-alpha-D-glucose contacts are provided by Ala356, Gln358, His373, Trp376, Asn377, Ser378, and Glu381. Ala396 is an an anthocyanidin binding site. UDP-alpha-D-glucose contacts are provided by Asp397 and Gln398.

The protein belongs to the UDP-glycosyltransferase family.

It catalyses the reaction oleanolate + UDP-alpha-D-glucose = oleanolate 3-O-beta-D-glucoside + UDP + H(+). Functionally, catalyzes the transfer of a glucose (Glc) moiety from UDP-Glc to the C-3 position of the oleanane sapogenins oleanolate and hederagenin, and to the C-28 carboxylic group of the lupane sapogenin betulinate. The monoglucosylated hederagenin 3-O-beta-D-glucoside is a feeding deterrent of the yellow-striped flea beetle (Phyllotreta nemorum). The chain is UDP-glycosyltransferase 73C12 from Barbarea vulgaris (Yellow rocket).